Reading from the N-terminus, the 454-residue chain is tRNA modification GTPase MnmE (454 aa).

The (6S)-5-formyl-5,6,7,8-tetrahydrofolate site is built by Arg-23, Glu-80, and Lys-120. One can recognise a TrmE-type G domain in the interval 216–377 (GMKVVIAGRP…LRNNLKQSMG (162 aa)). Asn-226 lines the K(+) pocket. Residues 226 to 231 (NAGKSS), 245 to 251 (TDIAGTT), 270 to 273 (DTAG), 335 to 338 (NKAD), and 358 to 360 (SAR) contribute to the GTP site. Residue Ser-230 coordinates Mg(2+). K(+) contacts are provided by Thr-245, Ile-247, and Thr-250. Thr-251 provides a ligand contact to Mg(2+). Lys-454 lines the (6S)-5-formyl-5,6,7,8-tetrahydrofolate pocket.

Belongs to the TRAFAC class TrmE-Era-EngA-EngB-Septin-like GTPase superfamily. TrmE GTPase family. As to quaternary structure, homodimer. Heterotetramer of two MnmE and two MnmG subunits. K(+) serves as cofactor.

It is found in the cytoplasm. In terms of biological role, exhibits a very high intrinsic GTPase hydrolysis rate. Involved in the addition of a carboxymethylaminomethyl (cmnm) group at the wobble position (U34) of certain tRNAs, forming tRNA-cmnm(5)s(2)U34. This chain is tRNA modification GTPase MnmE, found in Salmonella paratyphi A (strain ATCC 9150 / SARB42).